We begin with the raw amino-acid sequence, 396 residues long: Putative 2-hydroxyacid dehydrogenase YPL113C (396 aa).

NAD(+) is bound by residues 227-228 (SI), 311-313 (VGR), and aspartate 337. Arginine 313 is an active-site residue. Residue glutamate 342 is part of the active site. Histidine 361 functions as the Proton donor in the catalytic mechanism. NAD(+) is bound at residue 361–364 (HIGS).

The protein belongs to the D-isomer specific 2-hydroxyacid dehydrogenase family.

Putative 2-hydroxyacid dehydrogenase. The sequence is that of Putative 2-hydroxyacid dehydrogenase YPL113C from Saccharomyces cerevisiae (strain ATCC 204508 / S288c) (Baker's yeast).